A 233-amino-acid polypeptide reads, in one-letter code: Purine nucleoside phosphorylase DeoD-type (233 aa).

Histidine 4 is an a purine D-ribonucleoside binding site. Residues glycine 20, arginine 24, arginine 43, and 87–90 each bind phosphate; that span reads RIGT. A purine D-ribonucleoside-binding positions include 179-181 and 203-204; these read EME and SD. Aspartate 204 serves as the catalytic Proton donor.

It belongs to the PNP/UDP phosphorylase family. In terms of assembly, homohexamer; trimer of homodimers.

It carries out the reaction a purine D-ribonucleoside + phosphate = a purine nucleobase + alpha-D-ribose 1-phosphate. The catalysed reaction is a purine 2'-deoxy-D-ribonucleoside + phosphate = a purine nucleobase + 2-deoxy-alpha-D-ribose 1-phosphate. Functionally, catalyzes the reversible phosphorolytic breakdown of the N-glycosidic bond in the beta-(deoxy)ribonucleoside molecules, with the formation of the corresponding free purine bases and pentose-1-phosphate. The polypeptide is Purine nucleoside phosphorylase DeoD-type (Helicobacter pylori (strain J99 / ATCC 700824) (Campylobacter pylori J99)).